The sequence spans 179 residues: CASP-like protein 5A2 (179 aa).

The Cytoplasmic portion of the chain corresponds to Met1–Ser54. 2 helical membrane-spanning segments follow: residues Leu55–Ala75 and Thr76–Leu96. Over Thr97 to Asp114 the chain is Cytoplasmic. The chain crosses the membrane as a helical span at residues Trp115 to Ile135. The Extracellular segment spans residues Asp136–Ala154. A helical transmembrane segment spans residues Ala155–Leu175. At Ala176 to Arg179 the chain is on the cytoplasmic side.

This sequence belongs to the Casparian strip membrane proteins (CASP) family. As to quaternary structure, homodimer and heterodimers.

The protein resides in the cell membrane. This chain is CASP-like protein 5A2, found in Physcomitrium patens (Spreading-leaved earth moss).